We begin with the raw amino-acid sequence, 574 residues long: Phospholipase B-like protein A (574 aa).

An N-terminal signal peptide occupies residues Met-1 to Ser-20. N-linked (GlcNAc...) asparagine glycosylation is found at Asn-159, Asn-195, and Asn-415.

The protein belongs to the phospholipase B-like family.

Its subcellular location is the secreted. In terms of biological role, phospholipase that removes both fatty-acid chains from phosphatidylcholine and produces the water-soluble glycerophosphorylcholine. In addition to phosphatidylcholine deacylation, it also hydrolyzes phosphatidylinositol and phosphatidylethanolamine. This is Phospholipase B-like protein A (plbA) from Dictyostelium discoideum (Social amoeba).